A 235-amino-acid chain; its full sequence is Probable transcriptional regulatory protein Ccur92_05350 (235 aa).

This sequence belongs to the TACO1 family.

The protein resides in the cytoplasm. In Campylobacter curvus (strain 525.92), this protein is Probable transcriptional regulatory protein Ccur92_05350.